Consider the following 155-residue polypeptide: Small ribosomal subunit protein uS7c (155 aa).

It belongs to the universal ribosomal protein uS7 family. In terms of assembly, part of the 30S ribosomal subunit.

Its subcellular location is the plastid. It is found in the chloroplast. One of the primary rRNA binding proteins, it binds directly to 16S rRNA where it nucleates assembly of the head domain of the 30S subunit. The protein is Small ribosomal subunit protein uS7c (rps7) of Schisandra chinensis (Chinese magnolia vine).